Reading from the N-terminus, the 279-residue chain is Undecaprenyl-diphosphatase (279 aa).

6 consecutive transmembrane segments (helical) span residues 45 to 65 (FVEM…IVIY), 85 to 105 (WQLW…ALPF), 113 to 133 (FNFM…FIWV), 188 to 208 (SVAA…YSGL), 226 to 246 (LILL…IRFL), and 255 to 275 (FTIF…YWLV).

The protein belongs to the UppP family.

The protein localises to the cell membrane. The enzyme catalyses di-trans,octa-cis-undecaprenyl diphosphate + H2O = di-trans,octa-cis-undecaprenyl phosphate + phosphate + H(+). Catalyzes the dephosphorylation of undecaprenyl diphosphate (UPP). Confers resistance to bacitracin. This chain is Undecaprenyl-diphosphatase, found in Streptococcus agalactiae serotype III (strain NEM316).